The primary structure comprises 63 residues: Large ribosomal subunit protein uL29 (63 aa).

The protein belongs to the universal ribosomal protein uL29 family.

This is Large ribosomal subunit protein uL29 from Serratia proteamaculans (strain 568).